We begin with the raw amino-acid sequence, 260 residues long: Cobalt transport protein CbiM (260 aa).

The first 34 residues, 1 to 34 (MKLGESMKKNATLSVKIIAFLGVLIFTVMPVANA), serve as a signal peptide directing secretion. A run of 6 helical transmembrane segments spans residues 39–59 (EGYL…PFLI), 77–97 (LLFA…LPSF), 109–129 (LSTI…VLLF), 132–152 (LLLA…MAVM), 175–195 (IFFS…IQLG), and 215–235 (VFAI…VLIF).

Belongs to the CbiM family. Forms an energy-coupling factor (ECF) transporter complex composed of an ATP-binding protein (A component, CbiO), a transmembrane protein (T component, CbiQ) and 2 possible substrate-capture proteins (S components, CbiM and CbiN) of unknown stoichimetry.

The protein localises to the cell membrane. Its pathway is cofactor biosynthesis; adenosylcobalamin biosynthesis. Functionally, part of the energy-coupling factor (ECF) transporter complex CbiMNOQ involved in cobalt import. This is Cobalt transport protein CbiM from Clostridium cellulovorans (strain ATCC 35296 / DSM 3052 / OCM 3 / 743B).